Reading from the N-terminus, the 172-residue chain is Adenine phosphoribosyltransferase (172 aa).

Belongs to the purine/pyrimidine phosphoribosyltransferase family. In terms of assembly, homodimer.

Its subcellular location is the cytoplasm. It catalyses the reaction AMP + diphosphate = 5-phospho-alpha-D-ribose 1-diphosphate + adenine. Its pathway is purine metabolism; AMP biosynthesis via salvage pathway; AMP from adenine: step 1/1. In terms of biological role, catalyzes a salvage reaction resulting in the formation of AMP, that is energically less costly than de novo synthesis. The polypeptide is Adenine phosphoribosyltransferase (Clostridium botulinum (strain ATCC 19397 / Type A)).